Consider the following 555-residue polypeptide: MAPLRLFWIWLLVVGTRGVKDGDMRLADGGSANQGRVEIYYNGQWGTVCENMWDLTDASVVCRALGFQNATEALGGAAFGPGYGPIMLDEVRCTGTEPSLANCSSLGWMRSNCRHDKDASVICTNETRGVYTLDLSGELPAALEQIFESQKGCDLFITVKVREEDEIAMCAHKLILSTNPEAHGLWKEPGSRVTMEVDAECVPVVKDFIRYLYSRRIDVSLSSVKCLHKLASAYQAKQLQSYCGHLFAILIPQDPSFWTPLELYAYALATRDPVLEEICVQFLAWNFGALTQAEAWPSVPPALLQGLLSRTELVVPSELVLLLAVDKWSQERRTSHKEVEALVGQVRFPMMPPQDLFSLQFNLSLYWSHEALFQKKILQALEFHTVPFELLAQYWGLNLTEGTYQPRLYTSPTWSQSVMSSSYNPSRSFQTPQHPSFLFHDSSVSWSFVYLPTLQSCWNYGFSCSSDDPPLLALSKSSYSKSNPTIGYENRALLHCEGSFVVDVIDFKGWKALVPSALATNSSRSTSLFPCPSGVFSRFQVVIRPFYLTNSTDMD.

The N-terminal stretch at 1-18 (MAPLRLFWIWLLVVGTRG) is a signal peptide. The SRCR domain maps to 24–124 (MRLADGGSAN…HDKDASVICT (101 aa)). Intrachain disulfides connect Cys49/Cys113, Cys62/Cys123, and Cys93/Cys103. Asn69 carries N-linked (GlcNAc...) asparagine glycosylation. N-linked (GlcNAc...) asparagine glycosylation occurs at Asn125. A BTB domain is found at 153–221 (CDLFITVKVR…LYSRRIDVSL (69 aa)). One can recognise a BACK domain in the interval 260–360 (PLELYAYALA…MPPQDLFSLQ (101 aa)). N-linked (GlcNAc...) asparagine glycosylation is found at Asn362, Asn398, and Asn550.

Homodimers and homomultimers. The multimers form ring-like structures with a diameter of 30-40 nm. Binds LGALS1 and LGALS3. Binds ITGB1, COL4A1, COL5A1, COL6A1, FN1 and NID. Interacts with the gamma-tubulin ring complex (gamma-TuRC), composed of gamma-tubulin, TUBGCP2, TUBGCP3, TUBGCP4, TUBGCP5 and TUBGCP6. The unglycosylated form interacts with PDE4DIP; this interaction, which is PDE4DIP isoform-specific, may connect a pericentrosomal complex, made of AKAP9, CDK5RAP2, EB1/MAPRE1 and PDE4DIP, to the gamma-tubulin ring complex (gamma-TuRC) to promote microtubule assembly and acetylation.

The protein localises to the secreted. It localises to the extracellular space. The protein resides in the extracellular matrix. Functionally, promotes integrin-mediated cell adhesion. May stimulate host defense against viruses and tumor cells. The chain is Galectin-3-binding protein (LGALS3BP) from Bos taurus (Bovine).